We begin with the raw amino-acid sequence, 79 residues long: UPF0154 protein SUB0399 (79 aa).

A helical membrane pass occupies residues A4–I24.

This sequence belongs to the UPF0154 family.

Its subcellular location is the cell membrane. The polypeptide is UPF0154 protein SUB0399 (Streptococcus uberis (strain ATCC BAA-854 / 0140J)).